The primary structure comprises 863 residues: Major vault protein (863 aa).

9 MVP repeats span residues 2–60 (DADH…VPPR), 61–115 (HYCV…DVTP), 116–168 (LQIV…EVIK), 169–221 (ATVI…DIVS), 222–276 (AFIL…GVVD), 277–327 (VTTL…IQDV), 328–396 (YVLS…TRTA), 397–471 (IPLD…KTRV), and 472–534 (VSYR…LLGP). Residues 349 to 368 (GDEAEEEERESRAKKRGVQR) form a disordered region. Residues 677 to 706 (ARHEAERLEQEARGRLERQKITDQAEAEKA) enclose the IQ domain.

As to quaternary structure, the vault ribonucleoprotein particle is a huge (400 A x 670 A) cage structure of 12.9 MDa. It consists of a dimer of half-vaults, with each half-vault comprising 39 identical major vault protein (MVP) chains, PARP4 and one or more vault RNAs (vRNAs).

It localises to the cytoplasm. Its subcellular location is the nucleus. Its function is as follows. Required for normal vault structure. Vaults are multi-subunit structures that may act as scaffolds for proteins involved in signal transduction. Vaults may also play a role in nucleo-cytoplasmic transport. This is Major vault protein (mvp) from Danio rerio (Zebrafish).